The following is a 612-amino-acid chain: Elongation factor 4 (612 aa).

A tr-type G domain is found at 11–193 (KHIRNFSIIA…RIVTDVPAPS (183 aa)). GTP is bound by residues 23–28 (DHGKST) and 140–143 (NKVD).

This sequence belongs to the TRAFAC class translation factor GTPase superfamily. Classic translation factor GTPase family. LepA subfamily.

It is found in the cell membrane. The enzyme catalyses GTP + H2O = GDP + phosphate + H(+). Functionally, required for accurate and efficient protein synthesis under certain stress conditions. May act as a fidelity factor of the translation reaction, by catalyzing a one-codon backward translocation of tRNAs on improperly translocated ribosomes. Back-translocation proceeds from a post-translocation (POST) complex to a pre-translocation (PRE) complex, thus giving elongation factor G a second chance to translocate the tRNAs correctly. Binds to ribosomes in a GTP-dependent manner. This Lacticaseibacillus paracasei (strain ATCC 334 / BCRC 17002 / CCUG 31169 / CIP 107868 / KCTC 3260 / NRRL B-441) (Lactobacillus paracasei) protein is Elongation factor 4.